Here is a 207-residue protein sequence, read N- to C-terminus: Protein FMP32, mitochondrial (207 aa).

Residues 100-136 (ADRSEFHNIQNEYESVKNDLEKLRNKLREEITKTNAG) are a coiled coil. Residues 184–206 (VMQWLIGVCTGTFALVLAYMRLL) form a helical membrane-spanning segment.

The protein belongs to the CCDC90 family.

The protein localises to the mitochondrion. Its subcellular location is the membrane. The protein is Protein FMP32, mitochondrial (FMP32) of Saccharomyces cerevisiae (strain ATCC 204508 / S288c) (Baker's yeast).